Here is a 175-residue protein sequence, read N- to C-terminus: Adenylate kinase isoenzyme 6 homolog (175 aa).

ATP-binding residues include Gly-17, Gly-19, Lys-20, Thr-21, and Ser-22. Residues 37 to 60 form an NMPbind region; the sequence is DISSAVKEKELHDGWDSEFQCYIL. Positions 112 to 122 are LID; the sequence is KRNYNQHKITN. An ATP-binding site is contributed by Arg-113.

This sequence belongs to the adenylate kinase family. AK6 subfamily. As to quaternary structure, monomer and homodimer. Interacts with small ribosomal subunit protein uS11. Not a structural component of 43S pre-ribosomes, but transiently interacts with them by binding to uS11.

The protein resides in the cytoplasm. It is found in the nucleus. It catalyses the reaction AMP + ATP = 2 ADP. The catalysed reaction is ATP + H2O = ADP + phosphate + H(+). Broad-specificity nucleoside monophosphate (NMP) kinase that catalyzes the reversible transfer of the terminal phosphate group between nucleoside triphosphates and monophosphates. Also has ATPase activity. Involved in the late cytoplasmic maturation steps of the 40S ribosomal particles, specifically 18S rRNA maturation. While NMP activity is not required for ribosome maturation, ATPase activity is. Associates transiently with small ribosomal subunit protein uS11. ATP hydrolysis breaks the interaction with uS11. May temporarily remove uS11 from the ribosome to enable a conformational change of the ribosomal RNA that is needed for the final maturation step of the small ribosomal subunit. Its NMP activity may have a role in nuclear energy homeostasis. This chain is Adenylate kinase isoenzyme 6 homolog, found in Dictyostelium discoideum (Social amoeba).